Here is a 168-residue protein sequence, read N- to C-terminus: Protein GRIM REAPER (168 aa).

The signal sequence occupies residues 1-30 (MVIKIPNTFIKATSLLSLILYFLIIATSKS). Asn-59 carries an N-linked (GlcNAc...) asparagine glycan.

This sequence belongs to the STIG1 family. As to quaternary structure, interacts with PRK5 and to a lower extent with PRK4. Highly expressed in flowers, and at very low levels in leaves.

It localises to the secreted. The protein resides in the extracellular space. The protein localises to the apoplast. In terms of biological role, involved in the regulation of cell death induced by extracellular reactive oxygen species. Only the processed peptide, and not the full length GRI can bind in vivo to the extracellular domain of the receptor PRK5. The GRIp-induced cell death is superoxide and salicylic acid dependent. This chain is Protein GRIM REAPER, found in Arabidopsis thaliana (Mouse-ear cress).